The primary structure comprises 651 residues: MAVRQIKDGEYTATIYRLIKEARYGEAIQVLSNELQKQYRSRAGLSLLGYCYYQIQDFVNAADCYEQLIQISPEVEEYKLYYAQSLYKACMYPEAMKATFALDNAAYQSKMLKLQASVKYGEEDISGAKSLVEQMPSEDPESEINMGCLLYKEGHYEEACKKFITAMQVMGYKQDLSFNIALCYYSMKQYAPALKHIADIIERGIREHPELGVGMTTEGIEVRSVGNTLVLHETALIEAFNLKAAIEYQLKNYEAAQEALTDMPPRSEEELDPVTLHNQALMNMDTKPTEGFEKLQFLLQQNPFPPETFGNLLLLYSKYEYFDLAADVLAENAHLTYKFLTPYLYDFLDAMITCQTAPEEAFLKLDELAGMLTEQMRKLTKQVQEARHNRDDEAVKKAVNEYDETLEKYIPVLMAQAKIYWNMENYQMVEKIFRKSVEFCNEHDIWKLNVAHVLFMQDNKYKEAIGFYEPIVKKHYDNILNVSAAVLANLCVSYIMTSQNEEAEELMRKIEKEEEQIAYENPDKKIYHLCIVNLVIGTLYCAKGNYEFGISRVIKSLEPYNKKLGTDTWYHAKRCFLSLLENMSKHMIMLRDDVIVECIQFLEHCEIYGRNILAVIEQPLEEERMHIGKNTVTYESRQLKALLYEITSWNL.

7 TPR repeats span residues 8–41, 42–75, 140–173, 175–207, 372–405, 410–443, and 445–478; these read DGEYTATIYRLIKEARYGEAIQVLSNELQKQYRS, RAGLSLLGYCYYQIQDFVNAADCYEQLIQISPEV, PESEINMGCLLYKEGHYEEACKKFITAMQVMGYK, DLSFNIALCYYSMKQYAPALKHIADIIERGIRE, LTEQMRKLTKQVQEARHNRDDEAVKKAVNEYDET, IPVLMAQAKIYWNMENYQMVEKIFRKSVEFCNEH, and IWKLNVAHVLFMQDNKYKEAIGFYEPIVKKHYDN. The stretch at 494–521 forms a coiled coil; sequence YIMTSQNEEAEELMRKIEKEEEQIAYEN. The stretch at 530–563 is one TPR 8 repeat; it reads CIVNLVIGTLYCAKGNYEFGISRVIKSLEPYNKK.

It belongs to the TTC30/dfy-1/fleer family.

It localises to the cell projection. The protein resides in the cilium. Its function is as follows. Required for polyglutamylation of axonemal tubulin. Plays a role in anterograde intraflagellar transport (IFT), the process by which cilia precursors are transported from the base of the cilium to the site of their incorporation at the tip. This chain is Intraflagellar transport protein 70A (ift70a), found in Xenopus laevis (African clawed frog).